Here is a 587-residue protein sequence, read N- to C-terminus: Vesicular glutamate transporter 2.2 (587 aa).

The Cytoplasmic portion of the chain corresponds to 1–71 (MDTVKERVLA…CTCFGLPRRY (71 aa)). Residues 72 to 92 (IIAIMSGLGFCISFGIRCNLG) form a helical membrane-spanning segment. The Vesicular segment spans residues 93 to 125 (VAIVDMVNNSTIHKGGKIIIKGKAKFNWDPETV). 2 N-linked (GlcNAc...) asparagine glycosylation sites follow: N100 and N101. Residues 126 to 146 (GMIHGSFFWGYTVTQIPGGYI) traverse the membrane as a helical segment. Topologically, residues 147–149 (SSR) are cytoplasmic. A helical transmembrane segment spans residues 150–170 (LAANRVFGAAILLTSTLNMFI). Residues 171-180 (PSAARVHYGC) are Vesicular-facing. Residues 181-203 (VMFVRILQGLVEGVTYPACHGIW) traverse the membrane as a helical segment. Over 204-217 (SKWAPPLERSRLAT) the chain is Cytoplasmic. Residues 218 to 238 (TSFCGSYAGAVVAMPLAGILV) traverse the membrane as a helical segment. The Vesicular segment spans residues 239 to 245 (QYSGWSS). A helical transmembrane segment spans residues 246–266 (VFYIYGSFGIVWYMFWILVSY). The Cytoplasmic portion of the chain corresponds to 267–311 (ESPADHPTITDEERTYIEESIGESAKLLGAMEKYKTPWRKFFTSM). The helical transmembrane segment at 312–332 (PVYAIIVANFCRSWTFYLLLI) threads the bilayer. Residues 333–350 (SQPAYFEEVFGFEISKVG) lie on the Vesicular side of the membrane. Residues 351 to 371 (MVSALPHLVMTIIVPIGGQLA) traverse the membrane as a helical segment. At 372 to 387 (DYLRSKNILTTTTVRK) the chain is on the cytoplasmic side. A helical transmembrane segment spans residues 388-408 (IMNCGGFGMEATLLLVVGFSH). Residues 409–410 (SK) are Vesicular-facing. The helical transmembrane segment at 411–431 (GVAISFLVLAVGFSGFAISGF) threads the bilayer. Topologically, residues 432-444 (NVNHLDIAPRYAS) are cytoplasmic. The helical transmembrane segment at 445–465 (ILMGISNGVGTLSGMVCPLIV) threads the bilayer. Over 466-479 (GAMTKNKTREEWQN) the chain is Vesicular. N471 is a glycosylation site (N-linked (GlcNAc...) asparagine). The chain crosses the membrane as a helical span at residues 480–500 (VFLIASLVHYGGVIFYGIFAS). Residues 501–587 (GEKQPWADPE…ERTYTGDGYS (87 aa)) lie on the Cytoplasmic side of the membrane.

It belongs to the major facilitator superfamily. Sodium/anion cotransporter family. VGLUT subfamily. As to expression, expressed in spinal cord.

The protein resides in the cytoplasmic vesicle. Its subcellular location is the secretory vesicle. It is found in the synaptic vesicle membrane. The protein localises to the membrane. It localises to the synapse. The protein resides in the synaptosome. Its subcellular location is the cell membrane. The enzyme catalyses L-glutamate(out) = L-glutamate(in). It carries out the reaction 3 Na(+)(out) + phosphate(out) = 3 Na(+)(in) + phosphate(in). It catalyses the reaction phosphate(in) = phosphate(out). The catalysed reaction is K(+)(in) + H(+)(out) = K(+)(out) + H(+)(in). The enzyme catalyses chloride(in) = chloride(out). Its activity is regulated as follows. Chloride channel activity is allosterically activated by lumenal H(+) and Cl(-) leading to synaptic vesicles acidification. The L-glutamate transport activity is allosterically activated by lumenal H(+) and Cl(-). The allosteric requirement for H(+) efficiently prevents non-vesicular efflux across the plasma membrane. The L-glutamate uniporter activity exhibits a biphasic dependence on chloride concentration. In terms of biological role, multifunctional transporter that transports L-glutamate as well as multiple ions such as chloride, proton, potassium, sodium and phosphate. At the synaptic vesicle membrane, mainly functions as a uniporter which transports preferentially L-glutamate but also, phosphate from the cytoplasm into synaptic vesicles at presynaptic nerve terminals of excitatory neural cells. The L-glutamate or phosphate uniporter activity is electrogenic and is driven by the proton electrochemical gradient, mainly by the electrical gradient established by the vacuolar H(+)-ATPase across the synaptic vesicle membrane. In addition, functions as a chloride channel that allows a chloride permeation through the synaptic vesicle membrane therefore affects the proton electrochemical gradient and promotes synaptic vesicles acidification. Moreover, functions as a vesicular K(+)/H(+) antiport allowing to maintain the electrical gradient and to decrease chemical gradient and therefore sustain vesicular L-glutamate uptake. The vesicular H(+)/H(+) antiport activity is electroneutral. At the plasma membrane, following exocytosis, functions as a symporter of Na(+) and phosphate from the extracellular space to the cytoplasm allowing synaptic phosphate homeostasis regulation. The symporter activity is driven by an inside negative membrane potential and is electrogenic. Also involved in the regulation of retinal hyaloid vessel regression during postnatal development. May also play a role in the endocrine L-glutamatergic system of other tissues such as pineal gland and pancreas. The polypeptide is Vesicular glutamate transporter 2.2 (slc17a6a) (Danio rerio (Zebrafish)).